The following is a 228-amino-acid chain: E3 ubiquitin-protein ligase RNF114 (228 aa).

Residues 29–68 form an RING-type zinc finger; the sequence is CPVCLEVYEKPVQVPCGHVFCSACLQECLKPKKPVCGVCR. Zn(2+)-binding residues include C91 and C94. Residues 91–110 form a C2HC RNF-type zinc finger; that stretch reads CHGCRKKFFLSKIRSHVATC. Residue K102 is modified to N6-acetyllysine. Zn(2+) is bound by residues H106 and C110. At K112 the chain carries N6-acetyllysine.

Interacts with XAF1, the interaction increases XAF1 stability and proapoptotic effects, and may regulate IFN signaling. Autoubiquitinated. Polyubiquitinated in the presence of E2 enzymes UBE2D1, UBE2D2 and UBE2D3, but only monoubiquitinated in the presence of UBE2E1.

It is found in the cytoplasm. It localises to the nucleus. It carries out the reaction S-ubiquitinyl-[E2 ubiquitin-conjugating enzyme]-L-cysteine + [acceptor protein]-L-lysine = [E2 ubiquitin-conjugating enzyme]-L-cysteine + N(6)-ubiquitinyl-[acceptor protein]-L-lysine.. It functions in the pathway protein modification; protein ubiquitination. E3 ubiquitin-protein ligase that promotes the ubiquitination of various substrates. In turn, participates in the regulation of many biological processes including cell cycle, apoptosis, osteoclastogenesis as well as innate or adaptive immunity. Acts as negative regulator of NF-kappa-B-dependent transcription by promoting the ubiquitination and stabilization of the NF-kappa-B inhibitor TNFAIP3. May promote the ubiquitination of TRAF6 as well. Also acts as a negative regulator of T-cell activation. Inhibits cellular dsRNA responses and interferon production by targeting MAVS component for proteasomal degradation. Ubiquitinates the CDK inhibitor CDKN1A leading to its degradationand probably also CDKN1B and CDKN1C. This activity stimulates cell cycle G1-to-S phase transition and suppresses cellular senescence. May play a role in spermatogenesis. The chain is E3 ubiquitin-protein ligase RNF114 (RNF114) from Pan troglodytes (Chimpanzee).